The primary structure comprises 273 residues: Acetyl-coenzyme A carboxylase carboxyl transferase subunit alpha (273 aa).

Residues 1–244 (MKKATQSKAW…KVVLKQALDE (244 aa)) enclose the CoA carboxyltransferase C-terminal domain.

Belongs to the AccA family. As to quaternary structure, acetyl-CoA carboxylase is a heterohexamer composed of biotin carboxyl carrier protein (AccB), biotin carboxylase (AccC) and two subunits each of ACCase subunit alpha (AccA) and ACCase subunit beta (AccD).

The protein localises to the cytoplasm. The enzyme catalyses N(6)-carboxybiotinyl-L-lysyl-[protein] + acetyl-CoA = N(6)-biotinyl-L-lysyl-[protein] + malonyl-CoA. Its pathway is lipid metabolism; malonyl-CoA biosynthesis; malonyl-CoA from acetyl-CoA: step 1/1. In terms of biological role, component of the acetyl coenzyme A carboxylase (ACC) complex. First, biotin carboxylase catalyzes the carboxylation of biotin on its carrier protein (BCCP) and then the CO(2) group is transferred by the carboxyltransferase to acetyl-CoA to form malonyl-CoA. This chain is Acetyl-coenzyme A carboxylase carboxyl transferase subunit alpha, found in Acinetobacter baumannii (strain ACICU).